The chain runs to 299 residues: ATP phosphoribosyltransferase (299 aa).

It belongs to the ATP phosphoribosyltransferase family. Long subfamily. It depends on Mg(2+) as a cofactor.

The protein localises to the cytoplasm. It carries out the reaction 1-(5-phospho-beta-D-ribosyl)-ATP + diphosphate = 5-phospho-alpha-D-ribose 1-diphosphate + ATP. It functions in the pathway amino-acid biosynthesis; L-histidine biosynthesis; L-histidine from 5-phospho-alpha-D-ribose 1-diphosphate: step 1/9. Its activity is regulated as follows. Feedback inhibited by histidine. Its function is as follows. Catalyzes the condensation of ATP and 5-phosphoribose 1-diphosphate to form N'-(5'-phosphoribosyl)-ATP (PR-ATP). Has a crucial role in the pathway because the rate of histidine biosynthesis seems to be controlled primarily by regulation of HisG enzymatic activity. The chain is ATP phosphoribosyltransferase from Campylobacter lari (strain RM2100 / D67 / ATCC BAA-1060).